The primary structure comprises 269 residues: MIEQQAGSRIRVEALAVGGQEQAAQWAQRLGLPLTDAHADFALQLTDEGLQLQQLGDDAPGAVRVDFVEGAVAHRRLFGGGTGQMIAKAVGIQPGIRPSVLDATAGLGKDAFVLASLGCDMSLIERQPIIAALLEDGLARGRGDRDVGSIIARMRLLTGNSIDLIRAWTGEPPQVIYLDPMFPHREKTALVKKEMRLFRPLVGDDMDAPALLEAALALATHRVVVKRPRKAPCIDGLKPGYALDGKSSRYDIYPKKALKPKAATDESGA.

S-adenosyl-L-methionine contacts are provided by residues 125-126 (ER) and Asp179.

It belongs to the methyltransferase superfamily. RsmJ family.

It is found in the cytoplasm. The enzyme catalyses guanosine(1516) in 16S rRNA + S-adenosyl-L-methionine = N(2)-methylguanosine(1516) in 16S rRNA + S-adenosyl-L-homocysteine + H(+). Specifically methylates the guanosine in position 1516 of 16S rRNA. In Pseudomonas syringae pv. syringae (strain B728a), this protein is Ribosomal RNA small subunit methyltransferase J.